The sequence spans 650 residues: DNA mismatch repair protein MutL (650 aa).

Disordered regions lie at residues 358-392 (EASQAALPVTPQPRPALTPGHPDPPPQAQLQQPLV) and 408-448 (QPRP…QSAA). Pro residues predominate over residues 367–384 (TPQPRPALTPGHPDPPPQ). A compositionally biased stretch (low complexity) spans 430–444 (PYAPIAAAPVPASEP).

The protein belongs to the DNA mismatch repair MutL/HexB family.

Functionally, this protein is involved in the repair of mismatches in DNA. It is required for dam-dependent methyl-directed DNA mismatch repair. May act as a 'molecular matchmaker', a protein that promotes the formation of a stable complex between two or more DNA-binding proteins in an ATP-dependent manner without itself being part of a final effector complex. The sequence is that of DNA mismatch repair protein MutL from Geobacter sp. (strain M21).